Reading from the N-terminus, the 614-residue chain is Translation initiation factor IF-2 (614 aa).

The tr-type G domain maps to 115–283 (ARAPIVTIMG…ILLIAELNDY (169 aa)). The G1 stretch occupies residues 124–131 (GHVDHGKT). 124–131 (GHVDHGKT) provides a ligand contact to GTP. Residues 149–153 (GITQH) form a G2 region. Residues 170–173 (DTPG) form a G3 region. Residues 170 to 174 (DTPGH) and 224 to 227 (NKMD) contribute to the GTP site. Residues 224-227 (NKMD) are G4. Positions 260 to 262 (SAL) are G5.

The protein belongs to the TRAFAC class translation factor GTPase superfamily. Classic translation factor GTPase family. IF-2 subfamily.

Its subcellular location is the cytoplasm. In terms of biological role, one of the essential components for the initiation of protein synthesis. Protects formylmethionyl-tRNA from spontaneous hydrolysis and promotes its binding to the 30S ribosomal subunits. Also involved in the hydrolysis of GTP during the formation of the 70S ribosomal complex. This chain is Translation initiation factor IF-2, found in Ureaplasma urealyticum serovar 10 (strain ATCC 33699 / Western).